Here is a 444-residue protein sequence, read N- to C-terminus: UDP-N-acetylmuramate--L-alanine ligase (444 aa).

Residue 110 to 116 participates in ATP binding; the sequence is GAHGKTS.

Belongs to the MurCDEF family.

Its subcellular location is the cytoplasm. It carries out the reaction UDP-N-acetyl-alpha-D-muramate + L-alanine + ATP = UDP-N-acetyl-alpha-D-muramoyl-L-alanine + ADP + phosphate + H(+). The protein operates within cell wall biogenesis; peptidoglycan biosynthesis. In terms of biological role, cell wall formation. The protein is UDP-N-acetylmuramate--L-alanine ligase of Streptococcus pneumoniae (strain P1031).